An 840-amino-acid polypeptide reads, in one-letter code: Putative pentatricopeptide repeat-containing protein At1g31840 (840 aa).

PPR repeat units lie at residues 98–128, 145–179, 180–214, 216–250, 251–284, 285–319, 320–354, 355–389, 390–424, 425–459, 460–494, 495–529, 530–564, 565–599, 600–634, 635–669, 670–704, 705–739, 740–774, and 775–809; these read KDPSFYTIAHVLIRNGMFDVADKVFDEMITN, DADVCKFLMECCCRYGMVDKALEIFVYSTQLGVVI, PQDSVYRMLNSLIGSDRVDLIADHFDKLCRGGIEP, GVSAHGFVLDALFCKGEVTKALDFHRLVMERGFRV, GIVSCNKVLKGLSVDQIEVASRLLSLVLDCGPAP, NVVTFCTLINGFCKRGEMDRAFDLFKVMEQRGIEP, DLIAYSTLIDGYFKAGMLGMGHKLFSQALHKGVKL, DVVVFSSTIDVYVKSGDLATASVVYKRMLCQGISP, NVVTYTILIKGLCQDGRIYEAFGMYGQILKRGMEP, SIVTYSSLIDGFCKCGNLRSGFALYEDMIKMGYPP, DVVIYGVLVDGLSKQGLMLHAMRFSVKMLGQSIRL, NVVVFNSLIDGWCRLNRFDEALKVFRLMGIYGIKP, DVATFTTVMRVSIMEGRLEEALFLFFRMFKMGLEP, DALAYCTLIDAFCKHMKPTIGLQLFDLMQRNKISA, DIAVCNVVIHLLFKCHRIEDASKFFNNLIEGKMEP, DIVTYNTMICGYCSLRRLDEAERIFELLKVTPFGP, NTVTLTILIHVLCKNNDMDGAIRMFSIMAEKGSKP, NAVTYGCLMDWFSKSVDIEGSFKLFEEMQEKGISP, SIVSYSIIIDGLCKRGRVDEATNIFHQAIDAKLLP, and DVVAYAILIRGYCKVGRLVEAALLYEHMLRNGVKP.

Belongs to the PPR family. P subfamily.

This is Putative pentatricopeptide repeat-containing protein At1g31840 from Arabidopsis thaliana (Mouse-ear cress).